Reading from the N-terminus, the 410-residue chain is Beta-arrestin-2 (410 aa).

The residue at position 48 (Y48) is a Phosphotyrosine. Hydroxyproline; by PHD2 is present on residues P176 and P181. Positions 241 to 410 (ADICLFSTAQ…KDDDCDDQFC (170 aa)) are interaction with TRAF6. The residue at position 361 (S361) is a Phosphoserine. The tract at residues 378-410 (DTNYATDDDIVFEDFARLRLKGMKDDDCDDQFC) is interaction with AP2B1. T383 bears the Phosphothreonine; by CaMK2 mark. The [DE]-X(1,2)-F-X-X-[FL]-X-X-X-R motif signature appears at 386-396 (DIVFEDFARLR).

The protein belongs to the arrestin family. In terms of assembly, homooligomer; the self-association is mediated by InsP6-binding. Heterooligomer with ARRB1; the association is mediated by InsP6-binding. Interacts with ADRB2 and CHRM2. Interacts with PDE4A. Interacts with PDE4D. Interacts with MAPK10, MAPK1 and MAPK3. Interacts with DRD2. Interacts with FSHR. Interacts with CLTC. Interacts with HTR2C. Interacts with CCR5. Interacts with CXCR4. Interacts with SRC. Interacts with DUSP16; the interaction is interrupted by stimulation of AGTR1 and activation of MAPK10. Interacts with CHUK; the interaction is enhanced stimulation of ADRB2. Interacts with RELA. Interacts with MDM2; the interaction is enhanced by activation of GPCRs. Interacts with SLC9A5. Interacts with TRAF6. Interacts with IGF1R. Interacts with ENG. Interacts with KIR2DL1, KIR2DL3 and KIR2DL4. Interacts with LDLR. Interacts with AP2B1. Interacts with C5AR1. Interacts with RAF1. Interacts with MAP2K1. Interacts with MAPK1. Interacts with MAPK10; the interaction enhances MAPK10 activation by MAP3K5. Interacts with MAP2K4; the interaction is enhanced by presence of MAP3K5 and MAPK10. Interacts with MAP3K5. Interacts with AKT1. Interacts with IKBKB and MAP3K14. Interacts with SMO (activated). Interacts with GSK3A and GSK3B. Associates with protein phosphatase 2A (PP2A). Interacts with CXCR4; the interaction is dependent on C-terminal phosphorylation of CXCR4 and allows activation of MAPK1 and MAPK3. Interacts with GPR143. Interacts with HCK and CXCR1 (phosphorylated). Interacts with ACKR3 and ACKR4. Interacts with ARRDC1; the interaction is direct. Interacts with GPR61, GPR62 and GPR135. Interacts (via NACHT and LRR domains) with NLRP3; this interaction is direct and inducible by omega-3 polyunsaturated fatty acids (PUFAs). Interacts with FFAR4 (via C-terminus); this interaction is stimulated by long-chain fatty acids (LCFAs). Interacts with GPR35. Interacts with GPR84. Interacts with TIGIT; this interaction inhibits the NF-kappa-B pathway. Interacts with TGFBR3. Post-translationally, phosphorylated at Thr-383 in the cytoplasm; probably dephosphorylated at the plasma membrane. The phosphorylation does not regulate internalization and recycling of ADRB2, interaction with clathrin or AP2B1. The ubiquitination status appears to regulate the formation and trafficking of beta-arrestin-GPCR complexes and signaling. Ubiquitination appears to occur GPCR-specific. Ubiquitinated by MDM2; the ubiquitination is required for rapid internalization of ADRB2. Deubiquitinated by USP33; the deubiquitination leads to a dissociation of the beta-arrestin-GPCR complex. Stimulation of a class A GPCR, such as ADRB2, induces transient ubiquitination and subsequently promotes association with USP33. Stimulation of a class B GPCR promotes a sustained ubiquitination. Deubiquitinated by USP20; allowing USP20 to deubiquitinate TRAF6 leading to inhibition of NF-kappa-B signaling. In terms of processing, hydroxylation by PHD2 modulates the rate of internalization by slowing down recruitment to the plasma membrane and inhibiting subsequent co-internalization with class A receptors. As to expression, predominantly localized in neuronal tissues and in the spleen.

Its subcellular location is the cytoplasm. It is found in the nucleus. The protein localises to the cell membrane. The protein resides in the membrane. It localises to the clathrin-coated pit. Its subcellular location is the cytoplasmic vesicle. In terms of biological role, functions in regulating agonist-mediated G-protein coupled receptor (GPCR) signaling by mediating both receptor desensitization and resensitization processes. During homologous desensitization, beta-arrestins bind to the GPRK-phosphorylated receptor and sterically preclude its coupling to the cognate G-protein; the binding appears to require additional receptor determinants exposed only in the active receptor conformation. The beta-arrestins target many receptors for internalization by acting as endocytic adapters (CLASPs, clathrin-associated sorting proteins) and recruiting the GPRCs to the adapter protein 2 complex 2 (AP-2) in clathrin-coated pits (CCPs). However, the extent of beta-arrestin involvement appears to vary significantly depending on the receptor, agonist and cell type. Internalized arrestin-receptor complexes traffic to intracellular endosomes, where they remain uncoupled from G-proteins. Two different modes of arrestin-mediated internalization occur. Class A receptors, like ADRB2, OPRM1, ENDRA, D1AR and ADRA1B dissociate from beta-arrestin at or near the plasma membrane and undergo rapid recycling. Class B receptors, like AVPR2, AGTR1, NTSR1, TRHR and TACR1 internalize as a complex with arrestin and traffic with it to endosomal vesicles, presumably as desensitized receptors, for extended periods of time. Receptor resensitization then requires that receptor-bound arrestin is removed so that the receptor can be dephosphorylated and returned to the plasma membrane. Mediates endocytosis of CCR7 following ligation of CCL19 but not CCL21. Involved in internalization of P2RY1, P2RY4, P2RY6 and P2RY11 and ATP-stimulated internalization of P2RY2. Involved in phosphorylation-dependent internalization of OPRD1 and subsequent recycling or degradation. Involved in ubiquitination of IGF1R. Beta-arrestins function as multivalent adapter proteins that can switch the GPCR from a G-protein signaling mode that transmits short-lived signals from the plasma membrane via small molecule second messengers and ion channels to a beta-arrestin signaling mode that transmits a distinct set of signals that are initiated as the receptor internalizes and transits the intracellular compartment. Acts as a signaling scaffold for MAPK pathways such as MAPK1/3 (ERK1/2) and MAPK10 (JNK3). ERK1/2 and JNK3 activated by the beta-arrestin scaffold are largely excluded from the nucleus and confined to cytoplasmic locations such as endocytic vesicles, also called beta-arrestin signalosomes. Acts as a signaling scaffold for the AKT1 pathway. GPCRs for which the beta-arrestin-mediated signaling relies on both ARRB1 and ARRB2 (codependent regulation) include ADRB2, F2RL1 and PTH1R. For some GPCRs the beta-arrestin-mediated signaling relies on either ARRB1 or ARRB2 and is inhibited by the other respective beta-arrestin form (reciprocal regulation). Increases ERK1/2 signaling in AGTR1- and AVPR2-mediated activation (reciprocal regulation). Involved in CCR7-mediated ERK1/2 signaling involving ligand CCL19. Is involved in type-1A angiotensin II receptor/AGTR1-mediated ERK activity. Is involved in type-1A angiotensin II receptor/AGTR1-mediated MAPK10 activity. Is involved in dopamine-stimulated AKT1 activity in the striatum by disrupting the association of AKT1 with its negative regulator PP2A. Involved in AGTR1-mediated chemotaxis. Appears to function as signaling scaffold involved in regulation of MIP-1-beta-stimulated CCR5-dependent chemotaxis. Involved in attenuation of NF-kappa-B-dependent transcription in response to GPCR or cytokine stimulation by interacting with and stabilizing CHUK. Suppresses UV-induced NF-kappa-B-dependent activation by interacting with CHUK. The function is promoted by stimulation of ADRB2 and dephosphorylation of ARRB2. Involved in IL8-mediated granule release in neutrophils. Involved in p53/TP53-mediated apoptosis by regulating MDM2 and reducing the MDM2-mediated degradation of p53/TP53. May serve as nuclear messenger for GPCRs. Upon stimulation of OR1D2, may be involved in regulation of gene expression during the early processes of fertilization. Also involved in regulation of receptors other than GPCRs. Involved in endocytosis of TGFBR2 and TGFBR3 and down-regulates TGF-beta signaling such as NF-kappa-B activation. Involved in endocytosis of low-density lipoprotein receptor/LDLR. Involved in endocytosis of smoothened homolog/Smo, which also requires GRK2. Involved in endocytosis of SLC9A5. Involved in endocytosis of ENG and subsequent TGF-beta-mediated ERK activation and migration of epithelial cells. Involved in Toll-like receptor and IL-1 receptor signaling through the interaction with TRAF6 which prevents TRAF6 autoubiquitination and oligomerization required for activation of NF-kappa-B and JUN. Involved in insulin resistance by acting as insulin-induced signaling scaffold for SRC, AKT1 and INSR. Involved in regulation of inhibitory signaling of natural killer cells by recruiting PTPN6 and PTPN11 to KIR2DL1. Involved in the internalization of the atypical chemokine receptor ACKR3. Acts as an adapter protein coupling FFAR4 receptor to specific downstream signaling pathways, as well as mediating receptor endocytosis. During the activation step of NLRP3 inflammasome, directly associates with NLRP3 leading to inhibition of pro-inflammatory cytokine release and inhibition of inflammation. In Rattus norvegicus (Rat), this protein is Beta-arrestin-2 (Arrb2).